Consider the following 665-residue polypeptide: GTPase IMAP family member 8 (665 aa).

The AIG1-type G 1 domain occupies M8–R210. The segment at G17–S24 is G1. Residues G17–A25 and S38 contribute to the GTP site. Positions T44–M48 are G2. The tract at residues D65–D68 is G3. The G4 stretch occupies residues T134 to D137. Residues R135–D137 and N170 each bind GTP. A G5 region spans residues N169 to K171. The interval E217 to S246 is disordered. Residues E222–Q233 show a composition bias toward basic and acidic residues. Positions L234 to S246 are enriched in polar residues. AIG1-type G domains follow at residues T245–E435 and K436–I644. Coiled coils occupy residues N400 to G427 and Q608 to L657.

Belongs to the TRAFAC class TrmE-Era-EngA-EngB-Septin-like GTPase superfamily. AIG1/Toc34/Toc159-like paraseptin GTPase family. IAN subfamily. As to expression, expressed in the spleen, intestine, liver, and colon, as well as in lung, placenta, kidney, muscle, and heart. Extremely low expression, if any, in brain, in thymus, bone marrow, and blood leukocytes. Detected in T-cells.

It localises to the endoplasmic reticulum. The protein resides in the golgi apparatus. It is found in the mitochondrion. Its subcellular location is the cytoplasm. The protein localises to the cytosol. Its function is as follows. Exerts an anti-apoptotic effect in the immune system and is involved in responses to infections. This Homo sapiens (Human) protein is GTPase IMAP family member 8 (GIMAP8).